We begin with the raw amino-acid sequence, 313 residues long: MNETDHKHITVLLHEAVDGLAIKPNGIYIDGTFGRGGHSRLILSRLATNGRLIAIDRDPCAIAEANTISDARFQIIHTAFSAIPEVCESLGLMGKIDGILLDLGVSSPQLDDAERGFSFMRDGPLDMRMDTTKGLSAAEWLAQVSIEDLAWVLKTFGEERFAKRIAQAVVSYNKTNSEKITRTLQLAKIIADAVPFKDKHKHPATRSFQAIRIFINRELDELEKALTNALRVLAPEGRLSIISFHSLEDRMVKQFMKKNSKGEVVPKGLPILEAELNKNIPLNIIGKAIMPSEAEIVANARSRSAVLRIAAKR.

S-adenosyl-L-methionine contacts are provided by residues 36–38, aspartate 56, phenylalanine 80, aspartate 102, and glutamine 109; that span reads GGH.

It belongs to the methyltransferase superfamily. RsmH family.

The protein resides in the cytoplasm. The catalysed reaction is cytidine(1402) in 16S rRNA + S-adenosyl-L-methionine = N(4)-methylcytidine(1402) in 16S rRNA + S-adenosyl-L-homocysteine + H(+). Specifically methylates the N4 position of cytidine in position 1402 (C1402) of 16S rRNA. In Haemophilus ducreyi (strain 35000HP / ATCC 700724), this protein is Ribosomal RNA small subunit methyltransferase H.